Consider the following 189-residue polypeptide: Interferon alpha-8 (189 aa).

Positions 1–23 (MALTFYLLVALVVLSYKSFSSLG) are cleaved as a signal peptide. 2 disulfide bridges follow: Cys-24/Cys-122 and Cys-52/Cys-162.

This sequence belongs to the alpha/beta interferon family.

It localises to the secreted. Functionally, produced by macrophages, IFN-alpha have antiviral activities. Interferon stimulates the production of two enzymes: a protein kinase and an oligoadenylate synthetase. This chain is Interferon alpha-8 (IFNA8), found in Homo sapiens (Human).